Consider the following 762-residue polypeptide: Molybdenum cofactor sulfurase 2 (762 aa).

Lys-234 bears the N6-(pyridoxal phosphate)lysine mark. Residue Cys-400 is part of the active site. The MOSC domain occupies 590–738 (AWISKALRMP…LECGSILEPV (149 aa)).

The protein belongs to the class-V pyridoxal-phosphate-dependent aminotransferase family. MOCOS subfamily. It depends on pyridoxal 5'-phosphate as a cofactor.

It carries out the reaction Mo-molybdopterin + L-cysteine + AH2 = thio-Mo-molybdopterin + L-alanine + A + H2O. Its function is as follows. Sulfurates the molybdenum cofactor. Sulfation of molybdenum is essential for xanthine dehydrogenase (XDH) and aldehyde oxidase (ADO) enzymes in which molybdenum cofactor is liganded by 1 oxygen and 1 sulfur atom in active form. This chain is Molybdenum cofactor sulfurase 2, found in Aedes aegypti (Yellowfever mosquito).